Reading from the N-terminus, the 188-residue chain is Peptidyl-tRNA hydrolase (188 aa).

Y15 contributes to the tRNA binding site. H20 functions as the Proton acceptor in the catalytic mechanism. TRNA-binding residues include F66, N68, and N114.

It belongs to the PTH family. As to quaternary structure, monomer.

The protein resides in the cytoplasm. It catalyses the reaction an N-acyl-L-alpha-aminoacyl-tRNA + H2O = an N-acyl-L-amino acid + a tRNA + H(+). In terms of biological role, hydrolyzes ribosome-free peptidyl-tRNAs (with 1 or more amino acids incorporated), which drop off the ribosome during protein synthesis, or as a result of ribosome stalling. Its function is as follows. Catalyzes the release of premature peptidyl moieties from peptidyl-tRNA molecules trapped in stalled 50S ribosomal subunits, and thus maintains levels of free tRNAs and 50S ribosomes. This chain is Peptidyl-tRNA hydrolase, found in Lactococcus lactis subsp. lactis (strain IL1403) (Streptococcus lactis).